Consider the following 908-residue polypeptide: Protein translocase subunit SecA (908 aa).

ATP is bound by residues Gln87, 105–109 (GEGKT), and Asp513. Positions 852 to 863 (ARRAQAQHATAE) are enriched in low complexity. The interval 852–908 (ARRAQAQHATAENQLADDEAEAASPQTVVRDERKVGRNEPCPCGSGKKYKQCHGKID) is disordered. Zn(2+)-binding residues include Cys892, Cys894, Cys903, and His904. Residues 898–908 (KKYKQCHGKID) are compositionally biased toward basic residues.

The protein belongs to the SecA family. As to quaternary structure, monomer and homodimer. Part of the essential Sec protein translocation apparatus which comprises SecA, SecYEG and auxiliary proteins SecDF-YajC and YidC. Zn(2+) is required as a cofactor.

It localises to the cell inner membrane. The protein resides in the cytoplasm. It catalyses the reaction ATP + H2O + cellular proteinSide 1 = ADP + phosphate + cellular proteinSide 2.. Its function is as follows. Part of the Sec protein translocase complex. Interacts with the SecYEG preprotein conducting channel. Has a central role in coupling the hydrolysis of ATP to the transfer of proteins into and across the cell membrane, serving both as a receptor for the preprotein-SecB complex and as an ATP-driven molecular motor driving the stepwise translocation of polypeptide chains across the membrane. The polypeptide is Protein translocase subunit SecA (Vibrio atlanticus (strain LGP32) (Vibrio splendidus (strain Mel32))).